We begin with the raw amino-acid sequence, 619 residues long: DNA mismatch repair protein MutL (619 aa).

The protein belongs to the DNA mismatch repair MutL/HexB family.

In terms of biological role, this protein is involved in the repair of mismatches in DNA. It is required for dam-dependent methyl-directed DNA mismatch repair. May act as a 'molecular matchmaker', a protein that promotes the formation of a stable complex between two or more DNA-binding proteins in an ATP-dependent manner without itself being part of a final effector complex. This is DNA mismatch repair protein MutL from Shewanella frigidimarina (strain NCIMB 400).